Consider the following 626-residue polypeptide: MHYPKVYDVIVIGGGHAGTEAALAAARMGRQTLLLTHNIETLGQMSCNPAIGGIGKSHLVREIDALGGAMALAADKGGIQFRILNSRKGAAVRATRAQADRVRYKAAIRETLENQANLDIFQQAADDLIVEGDTVKGVVTQMGIRFDAKTVVLTTGTFLGGVIHVGLEKSSGGRAGDPPSIALAQRLRELKLPVGRLKTGTPPRIDARSVDFSVMTPQPGDFPSPVMSFMGDVSMHPEQVNCYITHTNEKTHDIIRGGLDRSPMYTGVIEGVGPRYCPSIEDKIHRFSDKDSHQVFLEPEGLDTHELYPNGISTSLPFDVQFELVRSIRGMENAHILRPGYAIEYDYFNPQALKFTLETKAINGLYFAGQINGTTGYEEAGAQGLLAGLNAARRAWEQEEWTPKRDQAYMGVLVDDLITLGTKEPYRMFTSRAEYRLMLREDNADQRLTTIGRELGLVDDVRWAAYCEKMEAVERETSRLQHVWAAPNNPMGKKFVEMTGADLSKECSAIDLLKRPNINFGQIAELTGSEVSQQVGEQIEIAVKYEGYINRQHEDVAQLKRLEETKIPADFDYDVVSGLSREITQKLKTVRPETLAQASRIPGVTPAAVQLVMITIRKNNMTKKTA.

Residue 13–18 coordinates FAD; it reads GGGHAG. Position 273–287 (273–287) interacts with NAD(+); it reads GPRYCPSIEDKIHRF.

Belongs to the MnmG family. Homodimer. Heterotetramer of two MnmE and two MnmG subunits. The cofactor is FAD.

Its subcellular location is the cytoplasm. Its function is as follows. NAD-binding protein involved in the addition of a carboxymethylaminomethyl (cmnm) group at the wobble position (U34) of certain tRNAs, forming tRNA-cmnm(5)s(2)U34. The protein is tRNA uridine 5-carboxymethylaminomethyl modification enzyme MnmG of Acinetobacter baumannii (strain AB307-0294).